A 75-amino-acid chain; its full sequence is UPF0270 protein PputGB1_1339 (75 aa).

The protein belongs to the UPF0270 family.

The protein is UPF0270 protein PputGB1_1339 of Pseudomonas putida (strain GB-1).